The sequence spans 1511 residues: Pleiotropic ABC efflux transporter of multiple drugs (1511 aa).

Positions 1–14 (MPEAKLNNNVNDVT) are enriched in polar residues. Residues 1–32 (MPEAKLNNNVNDVTSYSSASSSTENAADLHNY) form a disordered region. Topologically, residues 1 to 517 (MPEAKLNNNV…LLIRNMWRLR (517 aa)) are cytoplasmic. S22 bears the Phosphoserine mark. Residues T49 and T51 each carry the phosphothreonine modification. Residues 52–71 (AQSMQNSTQSAPNKSDAQSI) form a disordered region. Phosphoserine occurs at positions 54, 58, and 61. The ABC transporter 1 domain maps to 161 to 410 (LRKFQRSKET…FEDMGYVCPS (250 aa)). Residues 518 to 542 (NNIGFTLFMILGNCSMALILGSMFF) traverse the membrane as a helical segment. Over 543–558 (KIMKKGDTSTFYFRGS) the chain is Extracellular. Residues 559–579 (AMFFAILFNAFSSLLEIFSLY) traverse the membrane as a helical segment. Residues 580–611 (EARPITEKHRTYSLYHPSADAFASVLSEIPSK) lie on the Cytoplasmic side of the membrane. A helical transmembrane segment spans residues 612-628 (LIIAVCFNIIFYFLVDF). Topologically, residues 629–631 (RRN) are extracellular. Residues 632–650 (GGVFFFYLLINIVAVFSMS) traverse the membrane as a helical segment. At 651–665 (HLFRCVGSLTKTLSE) the chain is on the cytoplasmic side. A helical transmembrane segment spans residues 666-685 (AMVPASMLLLALSMYTGFAI). Residues 686 to 774 (PKKKILRWSK…QYYHKDKWRG (89 aa)) lie on the Extracellular side of the membrane. N734 carries an N-linked (GlcNAc...) asparagine glycan. Residues 775-793 (FGIGMAYVVFFFFVYLFLC) form a helical membrane-spanning segment. Residues 794–1237 (EYNEGAKQKG…GTSLQGLQNQ (444 aa)) lie on the Cytoplasmic side of the membrane. Residues 824–858 (EKNANDPENVGERSDLSSDRKMLQESSEEESDTYG) form a disordered region. K825 is covalently cross-linked (Glycyl lysine isopeptide (Lys-Gly) (interchain with G-Cter in ubiquitin)). The segment covering 833–846 (VGERSDLSSDRKML) has biased composition (basic and acidic residues). Phosphoserine occurs at positions 837, 840, 841, 849, 850, and 854. Residues 869–1112 (FHWRNLCYEV…MIDYFESHGA (244 aa)) enclose the ABC transporter 2 domain. 905-912 (GASGAGKT) contacts ATP. Residues 1238 to 1260 (MLAVFMFTVIFNPILQQYLPSFV) form a helical membrane-spanning segment. The Extracellular segment spans residues 1261 to 1291 (QQRDLYEARERPSRTFSWISFIFAQIFVEVP). The chain crosses the membrane as a helical span at residues 1292–1313 (WNILAGTIAYFIYYYPIGFYSN). Residues 1314 to 1324 (ASAAGQLHERG) are Cytoplasmic-facing. Residues 1325 to 1349 (ALFWLFSCAFYVYVGSMGLLVISFN) form a helical membrane-spanning segment. Residues 1350–1354 (QVAES) are Extracellular-facing. Residues 1355–1379 (AANLASLLFTMSLSFCGVMTTPSAM) traverse the membrane as a helical segment. Residues 1380-1388 (PRFWIFMYR) lie on the Cytoplasmic side of the membrane. Residues 1389–1407 (VSPLTYFIQALLAVGVANV) traverse the membrane as a helical segment. Topologically, residues 1408–1476 (DVKCADYELL…VNSFYSERWR (69 aa)) are extracellular. An N-linked (GlcNAc...) asparagine glycan is attached at N1447. The helical transmembrane segment at 1477-1499 (NYGIFICYIAFNYIAGVFFYWLA) threads the bilayer. Over 1500–1511 (RVPKKNGKLSKK) the chain is Cytoplasmic.

This sequence belongs to the ABC transporter superfamily. ABCG family. PDR (TC 3.A.1.205) subfamily. Ubiquitinylation mediates endocytosis and vacuolar degradation. Phosphorylation by casein kinase I stabilizes the protein half-life.

Its subcellular location is the cell membrane. With respect to regulation, FK506, isonitrile, enniatin, RU49953, kitasatospora E420, staurosporine CGP42700, prenyl-flavonoids, D-octapeptides were found to be inhibitors in vivo. Vanadate and oligomycin were found to be inhibitors in vitro. Its function is as follows. Active efflux of weakly charged organic compounds of 90 cubic Angstroms to 300 cubic Angstroms surface volume. Confers resistance to numerous chemicals including cycloheximide, sulfomethuron methyl, steroids, antiseptics, antibiotics, anticancer, herbicides, mycotoxins, insecticides, ionophores, alkaloids, flavonoids, phenothiazines, organotin compounds, carbazoles, lysosomotropic aminoesters, detergents, rhodamines and other fluorophores, azoles and other antifungals. Exhibits nucleoside triphosphatase activity. The chain is Pleiotropic ABC efflux transporter of multiple drugs (PDR5) from Saccharomyces cerevisiae (strain ATCC 204508 / S288c) (Baker's yeast).